Here is a 2367-residue protein sequence, read N- to C-terminus: Toxin B (2367 aa).

Positions 2–91 (SLVNRKQLEK…EILELKNSNL (90 aa)) are four-helical bundle. A GT44 domain is found at 96 to 469 (KNLHFIWIGG…YPEANTTITL (374 aa)). The interval 96 to 469 (KNLHFIWIGG…YPEANTTITL (374 aa)) is glucosyltransferase region. UDP-alpha-D-glucose-binding positions include 101–103 (IWI), Asn-139, 269–273 (SDILR), and 286–288 (DVD). 3 residues coordinate Mg(2+): Asp-286, Asp-288, and Glu-516. 519 to 521 (SLW) is a UDP-alpha-D-glucose binding site. The tract at residues 545 to 800 (GEDDNLDFSQ…KSKNLPELST (256 aa)) is autoprocessing region. Glu-546 and Asp-547 together coordinate Zn(2+). The region spanning 568 to 775 (SSSTKSSERG…EESIIKDISS (208 aa)) is the Peptidase C80 domain. 1D-myo-inositol hexakisphosphate is bound by residues Tyr-578, Lys-601, and Lys-648. His-654 provides a ligand contact to Zn(2+). The active-site For protease activity is the His-654. Residue Cys-699 is the Nucleophile; for protease activity of the active site. His-758 serves as a coordination point for Zn(2+). Positions 765, 776, and 793 each coordinate 1D-myo-inositol hexakisphosphate. The tract at residues 801-1501 (LLQEIRNNSN…VVLIIKVYMD (701 aa)) is translocation region. Interaction with host frizzled receptors FZD1, FZD2 and FZD7 regions lie at residues 1434-1439 (LKTLMA), 1487-1512 (SELSDVVLIIKVYMDNSKPPFGYYSN), and 1598-1600 (SLK). Cell wall-binding repeat units follow at residues 1833–1852 (VSGLVYINDSLYYFKPPIKN), 1854–1873 (ITGFTTIGDDKYYFNPDNGG), 1876–1895 (SVGETIIDGKNYYFSQNGVL), 1926–1945 (FTGKLIIDENVYYFGDNYRA), 1946–1965 (AIEWQTLDDEVYYFSTDTGR), 1967–1986 (FKGLNQIGDDKFYFNSDGIM), 1987–2006 (QKGFVNINDKTFYFDDSGVM), 2007–2026 (KSGYTEIDGRYFYFAENGEM), 2057–2076 (YSGILNFNNKIYYFDDSFTA), 2077–2097 (VVGWKDLEDGSKYYFDENTAE), 2099–2118 (SIGISIINDGKYYFNDSGIM), 2119–2138 (QIGFVTINNEVFYFSDSGIV), 2139–2158 (ESGMQNIDDNYFYISENGLV), 2209–2231 (ETGWIYDSENESDKYYFDPEAKK), 2233–2252 (YKGINVIDDIKYYFDENGIM), 2253–2272 (RTGLITFEDNHYYFNEDGEM), 2273–2292 (QYGYLNIEDKMFYFSEDGIM), 2323–2342 (YTGWLDLDEKRYYFTDEYIA), and 2343–2362 (ATGSVIIDGEEYYFDPDTAQ). The interval 1835–2367 (GLVYINDSLY…PDTAQLVISE (533 aa)) is receptor-binding (CROPS) region.

Belongs to the clostridial glucosylating toxin (LCGT) family. Interacts with host FZD1. Interacts with host FZD2; interaction promotes toxin entry into host cell and occupies the binding site for Wnt-adducted palmitoleate in FZD2, leading to prevent Wnt-binding and downstream Wnt signaling. Interacts with host FZD7. Interacts with host CSPG4. Interacts with host NECTIN3/PVRL3. Requires Zn(2+) as cofactor. The cofactor is Mn(2+). Mg(2+) serves as cofactor. Post-translationally, undergoes autocatalytic cleavage to release the N-terminal part (Glucosyltransferase TcdB), which constitutes the active part of the toxin, in the host cytosol. 1D-myo-inositol hexakisphosphate-binding (InsP6) activates the peptidase C80 domain and promotes autoprocessing.

It localises to the secreted. Its subcellular location is the host endosome membrane. The protein resides in the host cytoplasm. The protein localises to the host cytosol. It is found in the host cell membrane. The enzyme catalyses L-threonyl-[protein] + UDP-alpha-D-glucose = 3-O-(alpha-D-glucosyl)-L-threonyl-[protein] + UDP + H(+). Its activity is regulated as follows. Protease activity is activated upon binding to 1D-myo-inositol hexakisphosphate (InsP6), which induces conformational reorganization. Precursor of a cytotoxin that targets and disrupts the colonic epithelium, inducing the host inflammatory and innate immune responses and resulting in diarrhea and pseudomembranous colitis. TcdB constitutes the main toxin that mediates the pathology of C.difficile infection, an opportunistic pathogen that colonizes the colon when the normal gut microbiome is disrupted. Compared to TcdA, TcdB is more virulent and more important for inducing the host inflammatory and innate immune responses. This form constitutes the precursor of the toxin: it enters into host cells and mediates autoprocessing to release the active toxin (Glucosyltransferase TcdB) into the host cytosol. Targets colonic epithelia by binding to the frizzled receptors FZD1, FZD2 and FZD7, and enters host cells via clathrin-mediated endocytosis. Frizzled receptors constitute the major host receptors in the colonic epithelium, but other receptors, such as CSPG4 or NECTIN3/PVRL3, have been identified. Binding to carbohydrates and sulfated glycosaminoglycans on host cell surface also contribute to entry into cells. Once entered into host cells, acidification in the endosome promotes the membrane insertion of the translocation region and formation of a pore, leading to translocation of the GT44 and peptidase C80 domains across the endosomal membrane. This activates the peptidase C80 domain and autocatalytic processing, releasing the N-terminal part (Glucosyltransferase TcdB), which constitutes the active part of the toxin, in the cytosol. Its function is as follows. Active form of the toxin, which is released into the host cytosol following autoprocessing and inactivates small GTPases. Acts by mediating monoglucosylation of small GTPases of the Rho family (Rac1, RhoA, RhoB, RhoC, RhoG and Cdc42) in host cells at the conserved threonine residue located in the switch I region ('Thr-37/35'), using UDP-alpha-D-glucose as the sugar donor. Monoglucosylation of host small GTPases completely prevents the recognition of the downstream effector, blocking the GTPases in their inactive form, leading to actin cytoskeleton disruption and cell death, resulting in the loss of colonic epithelial barrier function. This is Toxin B from Clostridioides difficile (Peptoclostridium difficile).